We begin with the raw amino-acid sequence, 237 residues long: Sulfhydrogenase 2 subunit delta (237 aa).

Positions 11, 14, 83, 132, 160, 163, 170, and 179 each coordinate [4Fe-4S] cluster. [3Fe-4S] cluster contacts are provided by cysteine 188, cysteine 192, cysteine 199, and cysteine 202.

This sequence belongs to the [NiFe]/[NiFeSe] hydrogenase small subunit family. In terms of assembly, dimer of heterotetramer of alpha, beta, gamma and delta subunits. The nickel-containing alpha and delta subunits constitute the hydrogenase activity. The beta and gamma subunits (flavin-containing dimer) constitute the sulfur reductase activity. The cofactor is Ni(2+). Requires [4Fe-4S] cluster as cofactor. It depends on [3Fe-4S] cluster as a cofactor.

Its subcellular location is the cytoplasm. It carries out the reaction H2 + NADP(+) = NADPH + H(+). The catalysed reaction is H2 + NAD(+) = NADH + H(+). Functionally, part of a bifunctional enzyme complex that functions as a hydrogen-evolving hydrogenase with sulfur-reducing activity. May play a role in hydrogen cycling during fermentative growth. Activity exhibited with NAD in addition to NADPH. The alpha and delta subunits form the hydrogenase component that catalyzes the reduction of protons to evolve hydrogen. This is Sulfhydrogenase 2 subunit delta from Pyrococcus furiosus (strain ATCC 43587 / DSM 3638 / JCM 8422 / Vc1).